The primary structure comprises 227 residues: Small ribosomal subunit protein uS3 (227 aa).

One can recognise a KH type-2 domain in the interval 38–106 (LRKFIKDRFY…NVNINIQEIR (69 aa)).

This sequence belongs to the universal ribosomal protein uS3 family. In terms of assembly, part of the 30S ribosomal subunit. Forms a tight complex with proteins S10 and S14.

Functionally, binds the lower part of the 30S subunit head. Binds mRNA in the 70S ribosome, positioning it for translation. This is Small ribosomal subunit protein uS3 from Syntrophomonas wolfei subsp. wolfei (strain DSM 2245B / Goettingen).